Here is a 385-residue protein sequence, read N- to C-terminus: Lipid-A-disaccharide synthase (385 aa).

The protein belongs to the LpxB family.

It catalyses the reaction a lipid X + a UDP-2-N,3-O-bis[(3R)-3-hydroxyacyl]-alpha-D-glucosamine = a lipid A disaccharide + UDP + H(+). The protein operates within bacterial outer membrane biogenesis; LPS lipid A biosynthesis. Condensation of UDP-2,3-diacylglucosamine and 2,3-diacylglucosamine-1-phosphate to form lipid A disaccharide, a precursor of lipid A, a phosphorylated glycolipid that anchors the lipopolysaccharide to the outer membrane of the cell. The sequence is that of Lipid-A-disaccharide synthase from Xylella fastidiosa (strain M23).